The sequence spans 427 residues: Protein TIFY 6a (427 aa).

Basic and acidic residues predominate over residues 1 to 25 (MERDFLGAIGRKEEAAGKPEEHSDY). A disordered region spans residues 1–33 (MERDFLGAIGRKEEAAGKPEEHSDYRGGGGGAS). The Tify domain maps to 196-231 (QNPKVTQMTIFYDGLVNVFDNIPVEKAQELMLLASR). Composition is skewed to polar residues over residues 293–303 (LPKSSSSSNDS) and 317–327 (PLSQASPSQPI). The tract at residues 293-327 (LPKSSSSSNDSAGPKSGGLPLAVTPLSQASPSQPI) is disordered. Residues 343–367 (PQARKASLARFLEKRKERVSSVAPY) carry the Jas motif. A Nuclear localization signal motif is present at residues 345 to 352 (ARKASLAR). Residues 360–427 (RVSSVAPYPS…QEPPSTKLQI (68 aa)) form a disordered region. 2 stretches are compositionally biased toward polar residues: residues 369 to 402 (SSKSPLESSDTIGSPSTPSKSSCTDITPSTNNCE) and 411 to 427 (RNISFSSQEPPSTKLQI).

It belongs to the TIFY/JAZ family. Post-translationally, ubiquitinated.

The protein localises to the nucleus. In terms of biological role, repressor of jasmonate responses. The chain is Protein TIFY 6a from Oryza sativa subsp. indica (Rice).